A 184-amino-acid chain; its full sequence is Adenylate kinase 2 (184 aa).

Gly10 to Thr15 lines the ATP pocket. An NMP region spans residues Ser30–Val59. Residues Thr31, Arg36, Glu57–Val59, Gly85–Arg88, and Gln92 each bind AMP. Residues Gly126–Asp132 form an LID region. Arg127 is a binding site for ATP. Arg140 serves as a coordination point for AMP. An ATP-binding site is contributed by Gln168.

Belongs to the adenylate kinase family. In terms of assembly, monomer.

It is found in the cytoplasm. The catalysed reaction is AMP + ATP = 2 ADP. It participates in purine metabolism; AMP biosynthesis via salvage pathway; AMP from ADP: step 1/1. In terms of biological role, catalyzes the reversible transfer of the terminal phosphate group between ATP and AMP. Plays an important role in cellular energy homeostasis and in adenine nucleotide metabolism. The polypeptide is Adenylate kinase 2 (Nostoc sp. (strain PCC 7120 / SAG 25.82 / UTEX 2576)).